Reading from the N-terminus, the 30-residue chain is Babycurus-toxin 1 (30 aa).

The LCN-type CS-alpha/beta domain maps to 2–30; that stretch reads KDGYPTNSKGCKISGCLPGENKFCLNECQ.

This sequence belongs to the long (4 C-C) scorpion toxin superfamily. Sodium channel inhibitor family. In terms of tissue distribution, expressed by the venom gland.

It localises to the secreted. Its function is as follows. Binds to sodium channels (Nav) and inhibits both the activation and inactivation of the activated channels, thereby blocking neuronal transmission. This is Babycurus-toxin 1 from Babycurus centrurimorphus (East African scorpion).